A 462-amino-acid polypeptide reads, in one-letter code: Kinetochore protein Nuf2-A (462 aa).

2 coiled-coil regions span residues 143–277 (SSYK…DKCD) and 308–461 (EIHR…RLSR). Residues 239-259 (RMKSQIVESPEQRKSKTERMK) are disordered. The span at 248–259 (PEQRKSKTERMK) shows a compositional bias: basic and acidic residues.

This sequence belongs to the NUF2 family. Component of the NDC80 complex, which is composed of ndc80, cdca1, spbc24 and spbc25. The NDC80 complex interacts with mis12 and zwint.

It is found in the nucleus. The protein resides in the chromosome. It localises to the centromere. Its subcellular location is the kinetochore. Acts as a component of the essential kinetochore-associated NDC80 complex, which is required for chromosome segregation and spindle checkpoint activity. Required for kinetochore integrity and the organization of stable microtubule binding sites in the outer plate of the kinetochore. The NDC80 complex synergistically enhances the affinity of the SKA1 complex for microtubules and may allow the NDC80 complex to track depolymerizing microtubules. The chain is Kinetochore protein Nuf2-A (nuf2-a) from Xenopus laevis (African clawed frog).